Reading from the N-terminus, the 442-residue chain is NADH-quinone oxidoreductase subunit D (442 aa).

The protein belongs to the complex I 49 kDa subunit family. NDH-1 is composed of 14 different subunits. Subunits NuoB, C, D, E, F, and G constitute the peripheral sector of the complex.

It is found in the cell membrane. It catalyses the reaction a quinone + NADH + 5 H(+)(in) = a quinol + NAD(+) + 4 H(+)(out). Functionally, NDH-1 shuttles electrons from NADH, via FMN and iron-sulfur (Fe-S) centers, to quinones in the respiratory chain. The immediate electron acceptor for the enzyme in this species is believed to be a menaquinone. Couples the redox reaction to proton translocation (for every two electrons transferred, four hydrogen ions are translocated across the cytoplasmic membrane), and thus conserves the redox energy in a proton gradient. In Mycolicibacterium smegmatis (strain ATCC 700084 / mc(2)155) (Mycobacterium smegmatis), this protein is NADH-quinone oxidoreductase subunit D.